A 232-amino-acid chain; its full sequence is Phosphate import ATP-binding protein PstB (232 aa).

An ABC transporter domain is found at Met1–Ile227. ATP is bound at residue Gly18–Thr25.

This sequence belongs to the ABC transporter superfamily. Phosphate importer (TC 3.A.1.7) family. In terms of assembly, the complex is composed of two ATP-binding proteins (PstB), two transmembrane proteins (PstC and PstA) and a solute-binding protein (PstS).

The protein localises to the cell membrane. It catalyses the reaction phosphate(out) + ATP + H2O = ADP + 2 phosphate(in) + H(+). Its function is as follows. Part of the ABC transporter complex PstSACB involved in phosphate import. Responsible for energy coupling to the transport system. The protein is Phosphate import ATP-binding protein PstB of Mycoplasma mycoides subsp. mycoides SC (strain CCUG 32753 / NCTC 10114 / PG1).